Consider the following 270-residue polypeptide: Acyl-[acyl-carrier-protein]--UDP-N-acetylglucosamine O-acyltransferase (270 aa).

The protein belongs to the transferase hexapeptide repeat family. LpxA subfamily. Homotrimer.

It localises to the cytoplasm. It carries out the reaction a (3R)-hydroxyacyl-[ACP] + UDP-N-acetyl-alpha-D-glucosamine = a UDP-3-O-[(3R)-3-hydroxyacyl]-N-acetyl-alpha-D-glucosamine + holo-[ACP]. It participates in glycolipid biosynthesis; lipid IV(A) biosynthesis; lipid IV(A) from (3R)-3-hydroxytetradecanoyl-[acyl-carrier-protein] and UDP-N-acetyl-alpha-D-glucosamine: step 1/6. In terms of biological role, involved in the biosynthesis of lipid A, a phosphorylated glycolipid that anchors the lipopolysaccharide to the outer membrane of the cell. The chain is Acyl-[acyl-carrier-protein]--UDP-N-acetylglucosamine O-acyltransferase from Helicobacter pylori (strain P12).